The chain runs to 956 residues: Calsyntenin-3 (956 aa).

An N-terminal signal peptide occupies residues 1–20 (MARMSFLSFLLFCLTSVAHG). The Extracellular segment spans residues 21–850 (NKANKHKPWI…PHRNSVVPGA (830 aa)). 2 Cadherin domains span residues 30–151 (IETE…SPVF) and 152–271 (VERR…IPLF). N-linked (GlcNAc...) asparagine glycans are attached at residues Asn-333, Asn-353, Asn-513, and Asn-743. The chain crosses the membrane as a helical span at residues 851-871 (ATVIIMVCVGFLVVMVILGVF). Residues 872–956 (RIRSIHRRGE…EGRDSAPRRY (85 aa)) are Cytoplasmic-facing. Positions 921–937 (GECEDEEEVVDSPDDTS) are enriched in acidic residues. Residues 921-956 (GECEDEEEVVDSPDDTSDDQRIIIKKEGRDSAPRRY) form a disordered region. Residues 938–956 (DDQRIIIKKEGRDSAPRRY) show a composition bias toward basic and acidic residues.

The protein belongs to the calsyntenin family. Homooligomer and heterooligomer; mediates both homophilic and heterophilc interactions with clstn1 and clstn2 paralogs via cadherin domains. Interacts (via cadherin domains) with both alpha and beta isoforms of neurexins. By 48 hours post-fertilization (hpf), widely expressed in the brain, with strong expression in the telencephalon and the midbrain. Not expressed in the optic tectum.

The protein resides in the postsynaptic cell membrane. It localises to the endoplasmic reticulum membrane. It is found in the golgi apparatus membrane. In terms of biological role, synaptic adhesion molecule. Promotes synapse development by acting as a cell adhesion molecule at the postsynaptic membrane, which associates with presynaptic neurexins. This is Calsyntenin-3 from Danio rerio (Zebrafish).